Reading from the N-terminus, the 244-residue chain is UPF0280 protein MJ1526 (244 aa).

It belongs to the UPF0280 family.

This chain is UPF0280 protein MJ1526, found in Methanocaldococcus jannaschii (strain ATCC 43067 / DSM 2661 / JAL-1 / JCM 10045 / NBRC 100440) (Methanococcus jannaschii).